The primary structure comprises 283 residues: MEMO1 family protein MK0963 (283 aa).

This sequence belongs to the MEMO1 family.

The polypeptide is MEMO1 family protein MK0963 (Methanopyrus kandleri (strain AV19 / DSM 6324 / JCM 9639 / NBRC 100938)).